The primary structure comprises 115 residues: NADH-ubiquinone oxidoreductase chain 3 (115 aa).

3 consecutive transmembrane segments (helical) span residues 3-23 (LMITLLTNTMLTSLMVLIAFW), 55-75 (FFLVAITFLLFDLEIALLLPL), and 86-106 (LTLLMSFMLIILLAIGLAYEW).

The protein belongs to the complex I subunit 3 family. As to quaternary structure, core subunit of respiratory chain NADH dehydrogenase (Complex I) which is composed of 45 different subunits. Interacts with TMEM186. Interacts with TMEM242.

It is found in the mitochondrion inner membrane. It carries out the reaction a ubiquinone + NADH + 5 H(+)(in) = a ubiquinol + NAD(+) + 4 H(+)(out). Its function is as follows. Core subunit of the mitochondrial membrane respiratory chain NADH dehydrogenase (Complex I) which catalyzes electron transfer from NADH through the respiratory chain, using ubiquinone as an electron acceptor. Essential for the catalytic activity of complex I. This is NADH-ubiquinone oxidoreductase chain 3 from Loxodonta africana (African elephant).